Here is a 73-residue protein sequence, read N- to C-terminus: Translation initiation factor IF-1 (73 aa).

An S1-like domain is found at 1-72 (MAKDDVIEVE…TKGRITYRFI (72 aa)).

It belongs to the IF-1 family. Component of the 30S ribosomal translation pre-initiation complex which assembles on the 30S ribosome in the order IF-2 and IF-3, IF-1 and N-formylmethionyl-tRNA(fMet); mRNA recruitment can occur at any time during PIC assembly.

Its subcellular location is the cytoplasm. One of the essential components for the initiation of protein synthesis. Stabilizes the binding of IF-2 and IF-3 on the 30S subunit to which N-formylmethionyl-tRNA(fMet) subsequently binds. Helps modulate mRNA selection, yielding the 30S pre-initiation complex (PIC). Upon addition of the 50S ribosomal subunit IF-1, IF-2 and IF-3 are released leaving the mature 70S translation initiation complex. This chain is Translation initiation factor IF-1, found in Lactobacillus acidophilus (strain ATCC 700396 / NCK56 / N2 / NCFM).